A 243-amino-acid polypeptide reads, in one-letter code: Flavin-dependent thymidylate synthase (243 aa).

The ThyX domain maps to 2–207; it reads VKVKLINYTP…ELKPIIEWAK (206 aa). Residues serine 56, 80 to 82, and glutamine 88 contribute to the FAD site; that span reads RHR. Residues 77-80, 88-92, and arginine 146 contribute to the dUMP site; these read QLVR and QQSQR. Positions 80–90 match the ThyX motif motif; the sequence is RHRIASYTQQS. Residues 162 to 164 and histidine 168 each bind FAD; that span reads NLR. Arginine 173 is a binding site for dUMP. Arginine 173 functions as the Involved in ionization of N3 of dUMP, leading to its activation in the catalytic mechanism.

It belongs to the thymidylate synthase ThyX family. As to quaternary structure, homotetramer. FAD serves as cofactor.

The catalysed reaction is dUMP + (6R)-5,10-methylene-5,6,7,8-tetrahydrofolate + NADPH + H(+) = dTMP + (6S)-5,6,7,8-tetrahydrofolate + NADP(+). The protein operates within pyrimidine metabolism; dTTP biosynthesis. Functionally, catalyzes the reductive methylation of 2'-deoxyuridine-5'-monophosphate (dUMP) to 2'-deoxythymidine-5'-monophosphate (dTMP) while utilizing 5,10-methylenetetrahydrofolate (mTHF) as the methyl donor, and NADPH and FADH(2) as the reductant. This is Flavin-dependent thymidylate synthase from Pyrococcus horikoshii (strain ATCC 700860 / DSM 12428 / JCM 9974 / NBRC 100139 / OT-3).